Reading from the N-terminus, the 308-residue chain is Acetyl-coenzyme A carboxylase carboxyl transferase subunit beta (308 aa).

Residues 25–294 (VWTKCTSCEQ…PLVVSVNDAP (270 aa)) enclose the CoA carboxyltransferase N-terminal domain. Residues C29, C32, C48, and C51 each contribute to the Zn(2+) site. A C4-type zinc finger spans residues 29–51 (CTSCEQVLYYAELERNLEVCPKC).

It belongs to the AccD/PCCB family. As to quaternary structure, acetyl-CoA carboxylase is a heterohexamer composed of biotin carboxyl carrier protein (AccB), biotin carboxylase (AccC) and two subunits each of ACCase subunit alpha (AccA) and ACCase subunit beta (AccD). Requires Zn(2+) as cofactor.

The protein resides in the cytoplasm. It catalyses the reaction N(6)-carboxybiotinyl-L-lysyl-[protein] + acetyl-CoA = N(6)-biotinyl-L-lysyl-[protein] + malonyl-CoA. The protein operates within lipid metabolism; malonyl-CoA biosynthesis; malonyl-CoA from acetyl-CoA: step 1/1. Component of the acetyl coenzyme A carboxylase (ACC) complex. Biotin carboxylase (BC) catalyzes the carboxylation of biotin on its carrier protein (BCCP) and then the CO(2) group is transferred by the transcarboxylase to acetyl-CoA to form malonyl-CoA. The chain is Acetyl-coenzyme A carboxylase carboxyl transferase subunit beta from Vibrio cholerae serotype O1 (strain ATCC 39315 / El Tor Inaba N16961).